Consider the following 329-residue polypeptide: Sex comb on midleg-like protein 1 (329 aa).

2 positions are modified to phosphoserine: Ser138 and Ser238. Residues 258 to 325 enclose the SAM domain; it reads WSVEAVVLFL…YYIDRLKQGK (68 aa).

The protein belongs to the SCM family.

Its subcellular location is the nucleus. In terms of biological role, putative Polycomb group (PcG) protein. PcG proteins act by forming multiprotein complexes, which are required to maintain the transcriptionally repressive state of homeotic genes throughout development. May be involved in spermatogenesis during sexual maturation. The polypeptide is Sex comb on midleg-like protein 1 (SCML1) (Hoolock hoolock (Western hoolock gibbon)).